A 375-amino-acid polypeptide reads, in one-letter code: Chaperone protein DnaJ (375 aa).

The 65-residue stretch at 5–69 (DYYEILGVSK…QKRAAYDQYG (65 aa)) folds into the J domain. The CR-type zinc finger occupies 130–208 (GVTKEIRIPT…CHGHGRVEKA (79 aa)). The Zn(2+) site is built by Cys143, Cys146, Cys160, Cys163, Cys182, Cys185, Cys196, and Cys199. 4 CXXCXGXG motif repeats span residues 143–150 (CGVCHGSG), 160–167 (CPTCHGQG), 182–189 (CPHCHGRG), and 196–203 (CNSCHGHG).

Belongs to the DnaJ family. As to quaternary structure, homodimer. Requires Zn(2+) as cofactor.

It localises to the cytoplasm. Participates actively in the response to hyperosmotic and heat shock by preventing the aggregation of stress-denatured proteins and by disaggregating proteins, also in an autonomous, DnaK-independent fashion. Unfolded proteins bind initially to DnaJ; upon interaction with the DnaJ-bound protein, DnaK hydrolyzes its bound ATP, resulting in the formation of a stable complex. GrpE releases ADP from DnaK; ATP binding to DnaK triggers the release of the substrate protein, thus completing the reaction cycle. Several rounds of ATP-dependent interactions between DnaJ, DnaK and GrpE are required for fully efficient folding. Also involved, together with DnaK and GrpE, in the DNA replication of plasmids through activation of initiation proteins. In Serratia proteamaculans (strain 568), this protein is Chaperone protein DnaJ.